A 182-amino-acid polypeptide reads, in one-letter code: Adenine phosphoribosyltransferase (182 aa).

This sequence belongs to the purine/pyrimidine phosphoribosyltransferase family. In terms of assembly, homodimer.

It localises to the cytoplasm. It catalyses the reaction AMP + diphosphate = 5-phospho-alpha-D-ribose 1-diphosphate + adenine. Its pathway is purine metabolism; AMP biosynthesis via salvage pathway; AMP from adenine: step 1/1. Functionally, catalyzes a salvage reaction resulting in the formation of AMP, that is energically less costly than de novo synthesis. The chain is Adenine phosphoribosyltransferase from Campylobacter jejuni subsp. jejuni serotype O:23/36 (strain 81-176).